Reading from the N-terminus, the 123-residue chain is UPF0102 protein PSHAa2523 (123 aa).

The protein belongs to the UPF0102 family.

The polypeptide is UPF0102 protein PSHAa2523 (Pseudoalteromonas translucida (strain TAC 125)).